A 365-amino-acid chain; its full sequence is Succinyl-diaminopimelate desuccinylase (365 aa).

A Zn(2+)-binding site is contributed by H64. D66 is a catalytic residue. D95 is a Zn(2+) binding site. E125 (proton acceptor) is an active-site residue. Positions 126, 154, and 339 each coordinate Zn(2+).

Belongs to the peptidase M20A family. DapE subfamily. As to quaternary structure, homodimer. Requires Zn(2+) as cofactor. It depends on Co(2+) as a cofactor.

It catalyses the reaction N-succinyl-(2S,6S)-2,6-diaminopimelate + H2O = (2S,6S)-2,6-diaminopimelate + succinate. It functions in the pathway amino-acid biosynthesis; L-lysine biosynthesis via DAP pathway; LL-2,6-diaminopimelate from (S)-tetrahydrodipicolinate (succinylase route): step 3/3. Functionally, catalyzes the hydrolysis of N-succinyl-L,L-diaminopimelic acid (SDAP), forming succinate and LL-2,6-diaminopimelate (DAP), an intermediate involved in the bacterial biosynthesis of lysine and meso-diaminopimelic acid, an essential component of bacterial cell walls. The chain is Succinyl-diaminopimelate desuccinylase from Campylobacter curvus (strain 525.92).